Here is a 506-residue protein sequence, read N- to C-terminus: bZIP transcription factor TGA10 (506 aa).

Disordered stretches follow at residues 22–50 (VSYMDSSNKNQDPSESNNQISFGGQHQHH) and 113–218 (PSSI…KTLR). Polar residues-rich tracts occupy residues 25–45 (MDSSNKNQDPSESNNQISFGG), 113–124 (PSSIQEQRQNSG), 142–152 (PSTTNKMNTGL), and 160–180 (SKRSSQPSMELSNNLKNNDAP). The span at 207–216 (DAPKTPDPKT) shows a compositional bias: basic and acidic residues. One can recognise a bZIP domain in the interval 213 to 257 (DPKTLRRLAQNREAARKSRLRKKAYVQQLESSRIRLTQLEQELQR). Residues 215–235 (KTLRRLAQNREAARKSRLRKK) form a basic motif region. The Nuclear localization signal motif lies at 217 to 224 (LRRLAQNR). The tract at residues 241–255 (LESSRIRLTQLEQEL) is leucine-zipper. The region spanning 288–502 (AAVFDMEYAR…RALSSLWHAR (215 aa)) is the DOG1 domain.

The protein belongs to the bZIP family. Binds DNA as a dimer. Interacts with TGA2.2. In terms of tissue distribution, specifically expressed in roots.

It localises to the nucleus. Functionally, transcription activator that binds to as1-like elements (5'-TGACGTAAgggaTGACGCA-3') in promoters of target genes. Regulates transcription in response to plant signaling molecules salicylic acid (SA), methyl jasmonate (MJ) and auxin (2,4D) only in leaves. Prevents lateral branching and may repress defense signaling. The chain is bZIP transcription factor TGA10 from Nicotiana tabacum (Common tobacco).